The following is a 158-amino-acid chain: Protein-export protein SecB (158 aa).

This sequence belongs to the SecB family. Homotetramer, a dimer of dimers. One homotetramer interacts with 1 SecA dimer.

The protein resides in the cytoplasm. Its function is as follows. One of the proteins required for the normal export of preproteins out of the cell cytoplasm. It is a molecular chaperone that binds to a subset of precursor proteins, maintaining them in a translocation-competent state. It also specifically binds to its receptor SecA. This Photorhabdus laumondii subsp. laumondii (strain DSM 15139 / CIP 105565 / TT01) (Photorhabdus luminescens subsp. laumondii) protein is Protein-export protein SecB.